The primary structure comprises 494 residues: Alpha-amylase A (494 aa).

The N-terminal stretch at 1–18 (MFLAKSIVCLALLAVANA) is a signal peptide. At Gln19 the chain carries Pyrrolidone carboxylic acid. Residues Cys46 and Cys102 are joined by a disulfide bond. Residues Asn116, Arg165, and Asp174 each coordinate Ca(2+). Residues Cys153 and Cys167 are joined by a disulfide bond. Arg202 serves as a coordination point for chloride. Residue Asp204 is the Nucleophile of the active site. His208 provides a ligand contact to Ca(2+). Catalysis depends on Glu241, which acts as the Proton donor. Chloride contacts are provided by Asn304 and Arg343. Intrachain disulfides connect Cys376–Cys382 and Cys448–Cys460.

Belongs to the glycosyl hydrolase 13 family. Monomer. Requires Ca(2+) as cofactor. It depends on chloride as a cofactor.

It carries out the reaction Endohydrolysis of (1-&gt;4)-alpha-D-glucosidic linkages in polysaccharides containing three or more (1-&gt;4)-alpha-linked D-glucose units.. The sequence is that of Alpha-amylase A (Amy-p) from Drosophila melanogaster (Fruit fly).